Here is a 488-residue protein sequence, read N- to C-terminus: NADH-ubiquinone oxidoreductase chain 4 (488 aa).

14 helical membrane-spanning segments follow: residues 1-21 (MFLL…IEGN), 34-54 (SIAL…FILF), 79-99 (VDGL…IAIL), 110-130 (VLSF…VFLV), 134-154 (LLFY…IGLF), 164-184 (FYLF…IVAM), 207-227 (LFLF…SFLN), 238-258 (PLSG…YGIF), 272-292 (YTYI…FSTL), 301-321 (IAYS…SNTI), 328-348 (IALG…AGGI), 367-387 (VMPI…GTPL), 407-427 (LLGV…IFMY), and 452-472 (FIML…PAPI).

This sequence belongs to the complex I subunit 4 family.

It is found in the mitochondrion membrane. The enzyme catalyses a ubiquinone + NADH + 5 H(+)(in) = a ubiquinol + NAD(+) + 4 H(+)(out). Functionally, core subunit of the mitochondrial membrane respiratory chain NADH dehydrogenase (Complex I) that is believed to belong to the minimal assembly required for catalysis. Complex I functions in the transfer of electrons from NADH to the respiratory chain. The immediate electron acceptor for the enzyme is believed to be ubiquinone. In Aspergillus amstelodami, this protein is NADH-ubiquinone oxidoreductase chain 4 (ND4).